The following is a 229-amino-acid chain: Large ribosomal subunit protein uL1 (229 aa).

Belongs to the universal ribosomal protein uL1 family. Part of the 50S ribosomal subunit.

Binds directly to 23S rRNA. The L1 stalk is quite mobile in the ribosome, and is involved in E site tRNA release. In terms of biological role, protein L1 is also a translational repressor protein, it controls the translation of the L11 operon by binding to its mRNA. This is Large ribosomal subunit protein uL1 from Pasteurella multocida (strain Pm70).